The sequence spans 935 residues: Protocadherin gamma-A11 (935 aa).

Residues 1–29 form the signal peptide; the sequence is MANRLQRGDRSRLLLLLCIFLGTLRGFRA. Cadherin domains are found at residues 30 to 134, 135 to 243, 244 to 348, 349 to 453, 454 to 563, and 571 to 677; these read RQIR…APSF, QEDE…IPMF, TQSV…APEI, TITS…PPVF, PHSS…APEI, and DGST…ADLG. The Extracellular portion of the chain corresponds to 30–693; sequence RQIRYSVPEE…NSETSDLSLY (664 aa). N-linked (GlcNAc...) asparagine glycosylation occurs at Asn48. N-linked (GlcNAc...) asparagine glycosylation is found at Asn255, Asn266, Asn420, and Asn546. A helical membrane pass occupies residues 694 to 714; the sequence is LVVAVAAVSCIFLVFVIVLLA. Over 715–935 the chain is Cytoplasmic; the sequence is LRLWRWHKSR…KKKSGKKEKK (221 aa). Disordered regions lie at residues 805–844 and 905–935; these read CDPTSNQQAPPNTDWRFSQAQRPGTSGSQNGDDTGTWPNN and ATLTNAAGKRDGKAPAGGNGNKKKSGKKEKK. Residues 807-844 show a composition bias toward polar residues; that stretch reads PTSNQQAPPNTDWRFSQAQRPGTSGSQNGDDTGTWPNN. A compositionally biased stretch (basic residues) spans 925 to 935; the sequence is NKKKSGKKEKK.

It is found in the cell membrane. Its function is as follows. Potential calcium-dependent cell-adhesion protein. May be involved in the establishment and maintenance of specific neuronal connections in the brain. This chain is Protocadherin gamma-A11 (PCDHGA11), found in Homo sapiens (Human).